We begin with the raw amino-acid sequence, 220 residues long: Iron-sulfur cluster repair protein YtfE (220 aa).

It belongs to the RIC family. YtfE subfamily. In terms of assembly, homodimer.

The protein resides in the cytoplasm. In terms of biological role, di-iron-containing protein involved in the repair of iron-sulfur clusters damaged by oxidative and nitrosative stress conditions. The polypeptide is Iron-sulfur cluster repair protein YtfE (Citrobacter koseri (strain ATCC BAA-895 / CDC 4225-83 / SGSC4696)).